A 688-amino-acid polypeptide reads, in one-letter code: Elongation factor G (688 aa).

Positions 8 to 282 (DKFRNFGIMA…GVVDYLPSPL (275 aa)) constitute a tr-type G domain. GTP-binding positions include 17–24 (AHIDAGKT), 81–85 (DTPGH), and 135–138 (NKMD).

It belongs to the TRAFAC class translation factor GTPase superfamily. Classic translation factor GTPase family. EF-G/EF-2 subfamily.

It is found in the cytoplasm. Catalyzes the GTP-dependent ribosomal translocation step during translation elongation. During this step, the ribosome changes from the pre-translocational (PRE) to the post-translocational (POST) state as the newly formed A-site-bound peptidyl-tRNA and P-site-bound deacylated tRNA move to the P and E sites, respectively. Catalyzes the coordinated movement of the two tRNA molecules, the mRNA and conformational changes in the ribosome. This is Elongation factor G from Clostridium botulinum (strain Alaska E43 / Type E3).